The chain runs to 280 residues: Probable endonuclease 4 (280 aa).

Zn(2+) is bound by residues His-69, His-109, Glu-145, Asp-179, His-182, His-216, Asp-229, His-231, and Glu-261.

The protein belongs to the AP endonuclease 2 family. The cofactor is Zn(2+).

The enzyme catalyses Endonucleolytic cleavage to 5'-phosphooligonucleotide end-products.. Functionally, endonuclease IV plays a role in DNA repair. It cleaves phosphodiester bonds at apurinic or apyrimidinic (AP) sites, generating a 3'-hydroxyl group and a 5'-terminal sugar phosphate. The chain is Probable endonuclease 4 from Actinobacillus pleuropneumoniae serotype 5b (strain L20).